We begin with the raw amino-acid sequence, 588 residues long: Arginine--tRNA ligase (588 aa).

A 'HIGH' region motif is present at residues 126–136; the sequence is PNIAKEMHVGH.

The protein belongs to the class-I aminoacyl-tRNA synthetase family. In terms of assembly, monomer.

It localises to the cytoplasm. It carries out the reaction tRNA(Arg) + L-arginine + ATP = L-arginyl-tRNA(Arg) + AMP + diphosphate. In Nostoc sp. (strain PCC 7120 / SAG 25.82 / UTEX 2576), this protein is Arginine--tRNA ligase.